We begin with the raw amino-acid sequence, 282 residues long: Bifunctional protein FolD (282 aa).

NADP(+)-binding positions include 162-164 (GRS), Ser-187, and Val-228.

This sequence belongs to the tetrahydrofolate dehydrogenase/cyclohydrolase family. Homodimer.

It catalyses the reaction (6R)-5,10-methylene-5,6,7,8-tetrahydrofolate + NADP(+) = (6R)-5,10-methenyltetrahydrofolate + NADPH. It carries out the reaction (6R)-5,10-methenyltetrahydrofolate + H2O = (6R)-10-formyltetrahydrofolate + H(+). The protein operates within one-carbon metabolism; tetrahydrofolate interconversion. Functionally, catalyzes the oxidation of 5,10-methylenetetrahydrofolate to 5,10-methenyltetrahydrofolate and then the hydrolysis of 5,10-methenyltetrahydrofolate to 10-formyltetrahydrofolate. This is Bifunctional protein FolD from Thermus thermophilus (strain ATCC BAA-163 / DSM 7039 / HB27).